The primary structure comprises 1479 residues: Type VII secretion system protein EssC (1479 aa).

Over 1-229 (MHKLIIKYNK…RPPQPIQKNN (229 aa)) the chain is Cytoplasmic. Residues 230–252 (TVIWRSIIPPLVMIALTVVIFLV) traverse the membrane as a helical segment. The Extracellular portion of the chain corresponds to 253-256 (RPIG). The helical transmembrane segment at 257 to 279 (IYILMMIGMSSVTIVFGITTYFS) threads the bilayer. Residues 280-1479 (EKKKYNKDVE…QAYQKIRWFK (1200 aa)) lie on the Cytoplasmic side of the membrane. FtsK domains lie at 652–846 (DDIL…QDSN) and 997–1183 (QGPM…SEVS). ATP contacts are provided by residues 672 to 679 (GTTGSGKS) and 1014 to 1021 (GSPGYGRT).

The protein belongs to the EssC family. In terms of assembly, homooligomer. Interacts with EsaE.

The protein resides in the cell membrane. Functionally, component of the type VII secretion system (Ess). Required for the secretion of substrates including EsxA and EsxB. However, unable to support secretion of the substrate protein EsxC. This chain is Type VII secretion system protein EssC, found in Staphylococcus aureus (strain MSSA476).